Consider the following 517-residue polypeptide: B3 domain-containing protein REM1 (517 aa).

The TF-B3 1 DNA-binding region spans 7-92 (FSLFQQKFRT…VFHVAVVSPS (86 aa)). Residues 115-140 (DDVDDDDYGQDDEDDDDDDDEGEDNI) are compositionally biased toward acidic residues. The tract at residues 115 to 158 (DDVDDDDYGQDDEDDDDDDDEGEDNIENISEKTDKRQEADSSSD) is disordered. Basic and acidic residues predominate over residues 143–157 (ISEKTDKRQEADSSS). 2 DNA-binding regions (TF-B3) span residues 162–259 (FITA…CPQE) and 285–385 (FLIV…FCSK). The segment at 393–415 (GKGNQRTRKKRACETAPQPRNVK) is disordered.

As to expression, expressed in the shoot apical meristem (SAM), in the inflorescence apex and flowers.

The protein localises to the nucleus. May play a role in flower development. In Arabidopsis thaliana (Mouse-ear cress), this protein is B3 domain-containing protein REM1 (REM1).